Consider the following 534-residue polypeptide: Monolignol oxidoreductase AtBBE-like 13 (534 aa).

The signal sequence occupies residues 1 to 29 (MAFVLMNNTNAFLVTLLLLSLSYIPLSFS). 2 N-linked (GlcNAc...) asparagine glycosylation sites follow: N7 and N59. A disulfide bridge connects residues C38 and C102. Positions 117–181 (HDYEGLSYVS…KIHGFPAGLC (65 aa)) form a cross-link, 6-(S-cysteinyl)-8alpha-(pros-histidyl)-FAD (His-Cys).

This sequence belongs to the oxygen-dependent FAD-linked oxidoreductase family. The cofactor is FAD. The FAD cofactor is bound via a bicovalent 6-S-cysteinyl, 8alpha-N1-histidyl FAD linkage.

The protein resides in the secreted. Its subcellular location is the cell wall. It catalyses the reaction (E)-4-coumaroyl alcohol + A = (E)-4-coumaraldehyde + AH2. The catalysed reaction is (E)-coniferol + A = (E)-coniferaldehyde + AH2. The enzyme catalyses (E)-sinapyl alcohol + A = (E)-sinapaldehyde + AH2. It functions in the pathway phenylpropanoid metabolism. Its function is as follows. Mediates oxidation of p-hydroxylated derivatives of cinnamyl alcohol (i.e. the monolignols p-coumaryl-, coniferyl-, and sinapyl alcohol) to their corresponding aldehydes. The electron acceptor required for these reactions is not known, but does not seem to be dioxygen. Is much less efficient towards cinnamyl alcohol. This chain is Monolignol oxidoreductase AtBBE-like 13, found in Arabidopsis thaliana (Mouse-ear cress).